The sequence spans 263 residues: MSTSIKAIKESLEAVTSLLDPLFQELATDTRSGVQKALKSRQKAIQAELAEEERLEAMLSYEKALYKKGYQAIAGIDEVGRGPLAGPVVAACVILPKYCKIKGLNDSKKIPKSKHETIYQAVKEKALAIGIGIIDNQLIDEVNIYEATKLAMLEAIKQLESQLTQPDYLLIDAMTLDIAISQQSILKGDANSLSIAAASIVAKVTRDQMMANYDRIFPGYGFAKNAGYGTKEHLQGLKAYGITPIHRKSFEPVKSMCCDSTNP.

An RNase H type-2 domain is found at 71-262; sequence QAIAGIDEVG…VKSMCCDSTN (192 aa). Residues D77, E78, and D172 each contribute to the a divalent metal cation site.

It belongs to the RNase HII family. The cofactor is Mn(2+). Mg(2+) is required as a cofactor.

Its subcellular location is the cytoplasm. It carries out the reaction Endonucleolytic cleavage to 5'-phosphomonoester.. In terms of biological role, endonuclease that specifically degrades the RNA of RNA-DNA hybrids. This chain is Ribonuclease HII, found in Streptococcus pyogenes serotype M12 (strain MGAS2096).